The chain runs to 72 residues: Translation initiation factor IF-1 1 (72 aa).

In terms of domain architecture, S1-like spans 1-72 (MSKDDVIQMA…TRARIIFRAK (72 aa)).

It belongs to the IF-1 family. As to quaternary structure, component of the 30S ribosomal translation pre-initiation complex which assembles on the 30S ribosome in the order IF-2 and IF-3, IF-1 and N-formylmethionyl-tRNA(fMet); mRNA recruitment can occur at any time during PIC assembly.

It is found in the cytoplasm. In terms of biological role, one of the essential components for the initiation of protein synthesis. Stabilizes the binding of IF-2 and IF-3 on the 30S subunit to which N-formylmethionyl-tRNA(fMet) subsequently binds. Helps modulate mRNA selection, yielding the 30S pre-initiation complex (PIC). Upon addition of the 50S ribosomal subunit IF-1, IF-2 and IF-3 are released leaving the mature 70S translation initiation complex. In Polynucleobacter asymbioticus (strain DSM 18221 / CIP 109841 / QLW-P1DMWA-1) (Polynucleobacter necessarius subsp. asymbioticus), this protein is Translation initiation factor IF-1 1.